Here is a 576-residue protein sequence, read N- to C-terminus: Proline--tRNA ligase (576 aa).

This sequence belongs to the class-II aminoacyl-tRNA synthetase family. ProS type 1 subfamily. Homodimer.

It localises to the cytoplasm. The catalysed reaction is tRNA(Pro) + L-proline + ATP = L-prolyl-tRNA(Pro) + AMP + diphosphate. Functionally, catalyzes the attachment of proline to tRNA(Pro) in a two-step reaction: proline is first activated by ATP to form Pro-AMP and then transferred to the acceptor end of tRNA(Pro). As ProRS can inadvertently accommodate and process non-cognate amino acids such as alanine and cysteine, to avoid such errors it has two additional distinct editing activities against alanine. One activity is designated as 'pretransfer' editing and involves the tRNA(Pro)-independent hydrolysis of activated Ala-AMP. The other activity is designated 'posttransfer' editing and involves deacylation of mischarged Ala-tRNA(Pro). The misacylated Cys-tRNA(Pro) is not edited by ProRS. In Trichlorobacter lovleyi (strain ATCC BAA-1151 / DSM 17278 / SZ) (Geobacter lovleyi), this protein is Proline--tRNA ligase.